The primary structure comprises 363 residues: Dihydroorotate dehydrogenase (quinone) (363 aa).

FMN is bound by residues 67-71 and Thr-91; that span reads AGFDK. Lys-71 provides a ligand contact to substrate. Residue 116-120 participates in substrate binding; sequence NRMGF. Residues Asn-156 and Asn-189 each contribute to the FMN site. Substrate is bound at residue Asn-189. The active-site Nucleophile is Ser-192. Asn-194 serves as a coordination point for substrate. 2 residues coordinate FMN: Lys-231 and Thr-259. 260–261 lines the substrate pocket; sequence NT. Residues Gly-287, Gly-316, and 337–338 each bind FMN; that span reads YT.

Belongs to the dihydroorotate dehydrogenase family. Type 2 subfamily. Monomer. Requires FMN as cofactor.

The protein localises to the cell membrane. It catalyses the reaction (S)-dihydroorotate + a quinone = orotate + a quinol. Its pathway is pyrimidine metabolism; UMP biosynthesis via de novo pathway; orotate from (S)-dihydroorotate (quinone route): step 1/1. Its function is as follows. Catalyzes the conversion of dihydroorotate to orotate with quinone as electron acceptor. This is Dihydroorotate dehydrogenase (quinone) from Kocuria rhizophila (strain ATCC 9341 / DSM 348 / NBRC 103217 / DC2201).